The primary structure comprises 124 residues: Chemotaxis protein CheY1 (124 aa).

Residues 2 to 120 form the Response regulatory domain; that stretch reads KLLVVDDSST…VLKEKLEVVL (119 aa). Mg(2+) is bound by residues aspartate 7, aspartate 8, aspartate 53, and asparagine 55. 4-aspartylphosphate is present on aspartate 53.

As to quaternary structure, interacts (when phosphorylated) with FliM. Requires Mg(2+) as cofactor. In terms of processing, phosphorylated by CheAY. Dephosphorylated (inactivated) by CheZ.

The protein localises to the cytoplasm. Chemotactic response regulator protein that modulates the rotation direction of bacterial flagellar motors. Plays an important role in the colonization and infection of Helicobacter pylori. Upon phosphorylation by CheA, interacts with the flagellar motor protein FliM to cause clockwise flagellar rotation and bacterial reversals, as opposed to straight swimming when CheY1 is not phosphorylated. The sequence is that of Chemotaxis protein CheY1 (cheY1) from Helicobacter pylori (strain J99 / ATCC 700824) (Campylobacter pylori J99).